The following is a 131-amino-acid chain: Glycine cleavage system H protein (131 aa).

The region spanning 24 to 106 (IATLGISAFA…HGEGWLLKVR (83 aa)) is the Lipoyl-binding domain. Lysine 65 bears the N6-lipoyllysine mark.

The protein belongs to the GcvH family. As to quaternary structure, the glycine cleavage system is composed of four proteins: P, T, L and H. (R)-lipoate is required as a cofactor.

The glycine cleavage system catalyzes the degradation of glycine. The H protein shuttles the methylamine group of glycine from the P protein to the T protein. In Microcystis aeruginosa (strain NIES-843 / IAM M-2473), this protein is Glycine cleavage system H protein.